The following is an 84-amino-acid chain: Putative membrane protein insertion efficiency factor (84 aa).

It belongs to the UPF0161 family.

Its subcellular location is the cell inner membrane. In terms of biological role, could be involved in insertion of integral membrane proteins into the membrane. This Nostoc sp. (strain PCC 7120 / SAG 25.82 / UTEX 2576) protein is Putative membrane protein insertion efficiency factor.